The following is a 319-amino-acid chain: Zinc metalloproteinase/disintegrin (319 aa).

Positions 1-28 (EDEAPKMCGVTQNWESYEPIKKASQSNL) are excised as a propeptide. The 197-residue stretch at 34–230 (RYIELVIVAD…QKPQCILNKP (197 aa)) folds into the Peptidase M12B domain. The Ca(2+) site is built by glutamate 37 and aspartate 121. Disulfide bonds link cysteine 145–cysteine 225, cysteine 185–cysteine 209, and cysteine 187–cysteine 192. A Zn(2+)-binding site is contributed by histidine 170. Glutamate 171 is an active-site residue. Histidine 174 and histidine 180 together coordinate Zn(2+). Residues cysteine 225 and asparagine 228 each coordinate Ca(2+). A propeptide spanning residues 231–246 (LRTDTVSTPVSGNELL) is cleaved from the precursor. In terms of domain architecture, Disintegrin spans 238–319 (TPVSGNELLE…AGCPRNPFHA (82 aa)). 6 disulfide bridges follow: cysteine 252-cysteine 267, cysteine 254-cysteine 262, cysteine 261-cysteine 284, cysteine 275-cysteine 281, cysteine 280-cysteine 305, and cysteine 293-cysteine 312. Positions 297 to 299 (RGD) match the Cell attachment site motif.

Belongs to the venom metalloproteinase (M12B) family. P-II subfamily. P-IIa sub-subfamily. Monomer. Zn(2+) serves as cofactor. Expressed by the venom gland.

It is found in the secreted. Its activity is regulated as follows. Excess of calcium ions significantly suppress the autoproteolysis of the enzyme. Its function is as follows. metalloproteinase that impairs hemostasis in the envenomed animal. Shows autoproteolysis dependent on pH and temperature. Does not show hemorrhagic activity. Inhibits platelet aggregation induced by ADP (IC(50) is 200 nM), collagen (IC(50) is 500 nM), thrombin and epinephrin (IC(50) is 300 nM). Does not inhibit aggregation induced by ristocetin. In terms of biological role, inhibits platelet aggregation induced by ADP (IC(50) is 100 nM), collagen (IC(50) is 500 nM), thrombin and epinephrin (IC(50) is 300 nM). Does not inhibit aggregation induced by ristocetin. Significantly inhibits angiogenesis both in vivo and in vitro. This chain is Zinc metalloproteinase/disintegrin, found in Gloydius brevicauda (Korean slamosa snake).